The sequence spans 250 residues: Sugar fermentation stimulation protein homolog (250 aa).

The protein belongs to the SfsA family.

This chain is Sugar fermentation stimulation protein homolog, found in Synechococcus sp. (strain CC9311).